A 297-amino-acid chain; its full sequence is Glucose-6-phosphate 1-epimerase (297 aa).

Residues Arg57, Gln81, and Arg86 each contribute to the substrate site. Position 88 is a phosphoserine (Ser88). His159 is a catalytic residue. A substrate-binding site is contributed by Asp203. Residue Glu264 is part of the active site.

This sequence belongs to the glucose-6-phosphate 1-epimerase family.

It catalyses the reaction alpha-D-glucose 6-phosphate = beta-D-glucose 6-phosphate. Catalyzes the interconversion between the alpha and beta anomers from at least three hexose 6-phosphate sugars (Glc6P, Gal6P, and Man6P). This chain is Glucose-6-phosphate 1-epimerase, found in Saccharomyces cerevisiae (strain ATCC 204508 / S288c) (Baker's yeast).